The following is a 396-amino-acid chain: Tryptophan synthase beta chain (396 aa).

Lysine 88 carries the N6-(pyridoxal phosphate)lysine modification.

Belongs to the TrpB family. Tetramer of two alpha and two beta chains. Pyridoxal 5'-phosphate serves as cofactor.

It carries out the reaction (1S,2R)-1-C-(indol-3-yl)glycerol 3-phosphate + L-serine = D-glyceraldehyde 3-phosphate + L-tryptophan + H2O. It participates in amino-acid biosynthesis; L-tryptophan biosynthesis; L-tryptophan from chorismate: step 5/5. The beta subunit is responsible for the synthesis of L-tryptophan from indole and L-serine. In Shewanella baltica (strain OS195), this protein is Tryptophan synthase beta chain.